Here is a 258-residue protein sequence, read N- to C-terminus: Phosphoadenosine 5'-phosphosulfate reductase (258 aa).

The Nucleophile; cysteine thiosulfonate intermediate role is filled by Cys244.

This sequence belongs to the PAPS reductase family. CysH subfamily.

It localises to the cytoplasm. It catalyses the reaction [thioredoxin]-disulfide + sulfite + adenosine 3',5'-bisphosphate + 2 H(+) = [thioredoxin]-dithiol + 3'-phosphoadenylyl sulfate. It functions in the pathway sulfur metabolism; hydrogen sulfide biosynthesis; sulfite from sulfate: step 3/3. Catalyzes the formation of sulfite from phosphoadenosine 5'-phosphosulfate (PAPS) using thioredoxin as an electron donor. This chain is Phosphoadenosine 5'-phosphosulfate reductase, found in Vibrio vulnificus (strain YJ016).